Consider the following 229-residue polypeptide: PKHD-type hydroxylase Nham_1514 (229 aa).

The Fe2OG dioxygenase domain occupies 78 to 180; that stretch reads QIFPPLFNRY…RVASFFWLQS (103 aa). Fe cation contacts are provided by H98, D100, and H161. 2-oxoglutarate is bound at residue R171.

Fe(2+) is required as a cofactor. It depends on L-ascorbate as a cofactor.

The protein is PKHD-type hydroxylase Nham_1514 of Nitrobacter hamburgensis (strain DSM 10229 / NCIMB 13809 / X14).